The chain runs to 62 residues: Protein DsrB (62 aa).

The protein belongs to the DsrB family.

This chain is Protein DsrB, found in Enterobacter sp. (strain 638).